Here is a 203-residue protein sequence, read N- to C-terminus: Endo-type membrane-bound lytic murein transglycosylase A (203 aa).

A signal peptide spans 1–15 (MKLRWFAFLMVLLAG). Residue cysteine 16 is the site of N-palmitoyl cysteine attachment. Residue cysteine 16 is the site of S-diacylglycerol cysteine attachment.

It belongs to the transglycosylase Slt family.

It localises to the cell outer membrane. The catalysed reaction is Endolytic cleavage of the (1-&gt;4)-beta-glycosidic linkage between N-acetylmuramic acid (MurNAc) and N-acetylglucosamine (GlcNAc) residues in peptidoglycan with concomitant formation of a 1,6-anhydrobond in the MurNAc residue.. In terms of biological role, murein-degrading enzyme. May play a role in recycling of muropeptides during cell elongation and/or cell division. Preferentially cleaves at a distance of more than two disaccharide units from the ends of the glycan chain. This chain is Endo-type membrane-bound lytic murein transglycosylase A, found in Enterobacter sp. (strain 638).